The primary structure comprises 141 residues: Hemoglobin subunit alpha (141 aa).

The 141-residue stretch at 1–141 (VLSPADKTNI…VSTVLVSKYR (141 aa)) folds into the Globin domain. The residue at position 3 (Ser-3) is a Phosphoserine. Lys-7 carries the N6-succinyllysine modification. Thr-8 bears the Phosphothreonine mark. An N6-succinyllysine modification is found at Lys-11. The residue at position 16 (Lys-16) is an N6-acetyllysine; alternate. Lys-16 is modified (N6-succinyllysine; alternate). Tyr-24 carries the phosphotyrosine modification. A Phosphoserine modification is found at Ser-35. An N6-succinyllysine modification is found at Lys-40. Phosphoserine is present on Ser-49. His-58 contributes to the O2 binding site. His-87 serves as a coordination point for heme b. Residue Ser-102 is modified to Phosphoserine. A Phosphothreonine modification is found at Thr-108. Residues Ser-124 and Ser-131 each carry the phosphoserine modification. Phosphothreonine is present on Thr-134. Ser-138 carries the phosphoserine modification.

Belongs to the globin family. In terms of assembly, heterotetramer of two alpha chains and two beta chains. Red blood cells.

Functionally, involved in oxygen transport from the lung to the various peripheral tissues. In terms of biological role, hemopressin acts as an antagonist peptide of the cannabinoid receptor CNR1. Hemopressin-binding efficiently blocks cannabinoid receptor CNR1 and subsequent signaling. This is Hemoglobin subunit alpha (HBA) from Myotis velifer (Mouse-eared bat).